Reading from the N-terminus, the 366-residue chain is Flagellar P-ring protein (366 aa).

The N-terminal stretch at 1–20 (MVIKFLSALILLLVTTAAQA) is a signal peptide.

Belongs to the FlgI family. As to quaternary structure, the basal body constitutes a major portion of the flagellar organelle and consists of four rings (L,P,S, and M) mounted on a central rod.

Its subcellular location is the periplasm. It is found in the bacterial flagellum basal body. Its function is as follows. Assembles around the rod to form the L-ring and probably protects the motor/basal body from shearing forces during rotation. This is Flagellar P-ring protein from Escherichia coli (strain UTI89 / UPEC).